Consider the following 179-residue polypeptide: Tetratricopeptide repeat protein 36 (179 aa).

3 TPR repeats span residues 43–76 (SSQLEREAVRLAESMNVTDAIEKFTEAIQVCPLN), 77–110 (PSAYNNRAQAYRLQNSPEKALEDLNESLRLAGPK), and 115–148 (CQAYVQRASIYRLQGDDEKARADFAAAAELGSSF).

Belongs to the TTC36 family.

The polypeptide is Tetratricopeptide repeat protein 36 (Caenorhabditis briggsae).